Consider the following 127-residue polypeptide: UPF0325 protein VS_2356 (127 aa).

This sequence belongs to the UPF0325 family.

The sequence is that of UPF0325 protein VS_2356 from Vibrio atlanticus (strain LGP32) (Vibrio splendidus (strain Mel32)).